The chain runs to 647 residues: Acetyl-coenzyme A synthetase (647 aa).

CoA is bound by residues Arg-190–Lys-193, Thr-310, and Asn-334. ATP contacts are provided by residues Gly-386–Pro-388, Asp-410–Thr-415, Asp-499, and Arg-514. Ser-522 serves as a coordination point for CoA. Arg-525 provides a ligand contact to ATP. Positions 536, 538, and 541 each coordinate Mg(2+). Arg-583 is a CoA binding site. Lys-608 is modified (N6-acetyllysine).

The protein belongs to the ATP-dependent AMP-binding enzyme family. Requires Mg(2+) as cofactor. Post-translationally, acetylated. Deacetylation by the SIR2-homolog deacetylase activates the enzyme.

It carries out the reaction acetate + ATP + CoA = acetyl-CoA + AMP + diphosphate. Functionally, catalyzes the conversion of acetate into acetyl-CoA (AcCoA), an essential intermediate at the junction of anabolic and catabolic pathways. AcsA undergoes a two-step reaction. In the first half reaction, AcsA combines acetate with ATP to form acetyl-adenylate (AcAMP) intermediate. In the second half reaction, it can then transfer the acetyl group from AcAMP to the sulfhydryl group of CoA, forming the product AcCoA. The protein is Acetyl-coenzyme A synthetase of Xanthomonas campestris pv. campestris (strain 8004).